Here is a 427-residue protein sequence, read N- to C-terminus: L-rhamnose isomerase (427 aa).

Residues His-264, Asp-296, and Asp-298 each coordinate Mn(2+).

Belongs to the rhamnose isomerase family. The cofactor is Mn(2+).

Its subcellular location is the cytoplasm. It catalyses the reaction L-rhamnopyranose = L-rhamnulose. It functions in the pathway carbohydrate degradation; L-rhamnose degradation; glycerone phosphate from L-rhamnose: step 1/3. Its function is as follows. Catalyzes the interconversion of L-rhamnose and L-rhamnulose. This Lactiplantibacillus plantarum (strain ATCC BAA-793 / NCIMB 8826 / WCFS1) (Lactobacillus plantarum) protein is L-rhamnose isomerase.